The following is a 1309-amino-acid chain: Angiotensin-converting enzyme (1309 aa).

The N-terminal stretch at 1-33 (MGAASGCRWPWPPLLPLLLMLLLPPPPLPVALA) is a signal peptide. At 34-1259 (LDSALQPGNF…GLNLEEQQAR (1226 aa)) the chain is on the extracellular side. N-linked (GlcNAc...) asparagine glycosylation is found at Asn-42, Asn-58, Asn-78, Asn-115, Asn-135, Asn-150, and Asn-164. 2 Peptidase M2 domains span residues 44 to 627 (TADE…LGWP) and 646 to 1225 (VSDE…LGWP). An intrachain disulfide couples Cys-161 to Cys-169. Tyr-235 serves as a coordination point for chloride. N-linked (GlcNAc...) asparagine glycosylation occurs at Asn-322. A disulfide bridge links Cys-363 with Cys-381. His-394 lines the Zn(2+) pocket. Glu-395 (proton acceptor 1) is an active-site residue. Zn(2+) is bound by residues His-398 and Glu-422. The N-linked (GlcNAc...) asparagine glycan is linked to Asn-512. The active-site Proton donor 1 is His-523. N-linked (GlcNAc...) asparagine glycosylation is present at Asn-526. Residue Arg-532 coordinates chloride. Residues Cys-548 and Cys-560 are joined by a disulfide bond. N-linked (GlcNAc...) asparagine glycosylation is found at Asn-680, Asn-698, Asn-717, and Asn-763. An intrachain disulfide couples Cys-760 to Cys-766. The chloride site is built by Arg-794 and Tyr-832. A glycan (N-linked (GlcNAc...) asparagine) is linked at Asn-945. Cys-960 and Cys-978 are oxidised to a cystine. His-991 is a Zn(2+) binding site. The Proton acceptor 2 role is filled by Glu-992. Zn(2+) contacts are provided by His-995 and Glu-1019. Chloride is bound by residues Trp-1093 and Arg-1097. Catalysis depends on His-1121, which acts as the Proton donor 2. Chloride is bound at residue Arg-1130. Cys-1146 and Cys-1158 form a disulfide bridge. N-linked (GlcNAc...) asparagine glycans are attached at residues Asn-1194 and Asn-1228. Positions 1218–1259 (HGEKLGWPQYNWTPNSARLEGSFAGTGRVNFLGLNLEEQQAR) are juxtamembrane stalk. The chain crosses the membrane as a helical span at residues 1260–1280 (VGQWVLLFLGVTLLVATMGLT). At 1281–1309 (QRLFSIRHQILRRTHRGPQFGSEVELRHS) the chain is on the cytoplasmic side. Residue Ser-1302 is modified to Phosphoserine.

The protein belongs to the peptidase M2 family. Monomer and homodimer; homodimerizes following binding to an inhibitor. Interacts with calmodulin (CALM1, CALM2 or CALM3); interaction takes place in the cytoplasmic region and regulates phosphorylation and proteolytic cleavage. Zn(2+) is required as a cofactor. The cofactor is chloride. Post-translationally, produced following proteolytic cleavage by secretase enzymes that cleave the transmembrane form in the juxtamembrane stalk region upstream of the transmembrane region. Cleavage can take place at different sites of the juxtamembrane stalk region. Phosphorylated by CK2 on Ser-1302; which allows membrane retention. Phosphorylated on tyrosine residues on its extracellular part, promoting cleavage by secretase enzymes and formation of the soluble form (Angiotensin-converting enzyme, soluble form).

The protein localises to the cell membrane. The protein resides in the cytoplasm. Its subcellular location is the secreted. The enzyme catalyses Release of a C-terminal dipeptide, oligopeptide-|-Xaa-Yaa, when Xaa is not Pro, and Yaa is neither Asp nor Glu. Thus, conversion of angiotensin I to angiotensin II, with increase in vasoconstrictor activity, but no action on angiotensin II.. It carries out the reaction angiotensin I + H2O = L-histidyl-L-leucine + angiotensin II. The catalysed reaction is bradykinin + H2O = L-Phe-L-Arg + bradykinin(1-7). It catalyses the reaction substance P + H2O = substance P(1-9) + L-Leu-L-Met-NH2. The enzyme catalyses substance P + H2O = substance P(1-8) + Gly-L-Leu-L-Met-NH2. It carries out the reaction substance P + H2O = L-Phe-L-Phe-Gly-L-Leu-L-Met-NH2 + substance P(1-6). The catalysed reaction is neurotensin + H2O = neurotensin(1-11) + L-isoleucyl-L-leucine. It catalyses the reaction goralatide + H2O = N-acetyl-L-seryl-L-aspartate + L-lysyl-L-proline. The enzyme catalyses Met-enkephalin + H2O = L-phenylalanyl-L-methionine + L-tyrosylglycylglycine. It carries out the reaction Leu-enkephalin + H2O = L-tyrosylglycylglycine + L-phenylalanyl-L-leucine. The catalysed reaction is Met-enkephalin-Arg-Phe + H2O = L-arginyl-L-phenylalanine + Met-enkephalin. The dipeptidyl carboxypeptidase activity is strongly activated by chloride. The dipeptidyl carboxypeptidase activity is specifically inhibited by lisinopril, captopril and enalaprilat. Dipeptidyl carboxypeptidase that removes dipeptides from the C-terminus of a variety of circulating hormones, such as angiotensin I, bradykinin or enkephalins, thereby playing a key role in the regulation of blood pressure, electrolyte homeostasis or synaptic plasticity. Composed of two similar catalytic domains, each possessing a functional active site, with different selectivity for substrates. Plays a major role in the angiotensin-renin system that regulates blood pressure and sodium retention by the kidney by converting angiotensin I to angiotensin II, resulting in an increase of the vasoconstrictor activity of angiotensin. Also able to inactivate bradykinin, a potent vasodilator, and therefore enhance the blood pressure response. Acts as a regulator of synaptic transmission by mediating cleavage of neuropeptide hormones, such as substance P, neurotensin or enkephalins. Catalyzes degradation of different enkephalin neuropeptides (Met-enkephalin, Leu-enkephalin, Met-enkephalin-Arg-Phe and possibly Met-enkephalin-Arg-Gly-Leu). Acts as a regulator of synaptic plasticity in the nucleus accumbens of the brain by mediating cleavage of Met-enkephalin-Arg-Phe, a strong ligand of Mu-type opioid receptor OPRM1, into Met-enkephalin. Met-enkephalin-Arg-Phe cleavage by ACE decreases activation of OPRM1, leading to long-term synaptic potentiation of glutamate release. Also acts as a regulator of hematopoietic stem cell differentiation by mediating degradation of hemoregulatory peptide N-acetyl-SDKP (AcSDKP). Acts as a regulator of cannabinoid signaling pathway by mediating degradation of hemopressin, an antagonist peptide of the cannabinoid receptor CNR1. Involved in amyloid-beta metabolism by catalyzing degradation of Amyloid-beta protein 40 and Amyloid-beta protein 42 peptides, thereby preventing plaque formation. Catalyzes cleavage of cholecystokinin (maturation of Cholecystokinin-8 and Cholecystokinin-5) and Gonadoliberin-1 (both maturation and degradation) hormones. Degradation of hemoregulatory peptide N-acetyl-SDKP (AcSDKP) and amyloid-beta proteins is mediated by the N-terminal catalytic domain, while angiotensin I and cholecystokinin cleavage is mediated by the C-terminal catalytic region. Functionally, soluble form that is released in blood plasma and other body fluids following proteolytic cleavage in the juxtamembrane stalk region. In Sus scrofa (Pig), this protein is Angiotensin-converting enzyme.